The chain runs to 291 residues: 33 kDa chaperonin (291 aa).

2 disulfide bridges follow: Cys237-Cys239 and Cys270-Cys273.

This sequence belongs to the HSP33 family. Under oxidizing conditions two disulfide bonds are formed involving the reactive cysteines. Under reducing conditions zinc is bound to the reactive cysteines and the protein is inactive.

The protein localises to the cytoplasm. Its function is as follows. Redox regulated molecular chaperone. Protects both thermally unfolding and oxidatively damaged proteins from irreversible aggregation. Plays an important role in the bacterial defense system toward oxidative stress. This Halalkalibacterium halodurans (strain ATCC BAA-125 / DSM 18197 / FERM 7344 / JCM 9153 / C-125) (Bacillus halodurans) protein is 33 kDa chaperonin.